The primary structure comprises 160 residues: Transcription elongation factor GreA (160 aa).

Residues 49 to 73 adopt a coiled-coil conformation; the sequence is HAAKEEQSHNEGRIADLEDKLARAD.

The protein belongs to the GreA/GreB family.

In terms of biological role, necessary for efficient RNA polymerase transcription elongation past template-encoded arresting sites. The arresting sites in DNA have the property of trapping a certain fraction of elongating RNA polymerases that pass through, resulting in locked ternary complexes. Cleavage of the nascent transcript by cleavage factors such as GreA or GreB allows the resumption of elongation from the new 3'terminus. GreA releases sequences of 2 to 3 nucleotides. The chain is Transcription elongation factor GreA from Rhodopseudomonas palustris (strain BisA53).